Reading from the N-terminus, the 343-residue chain is Phosphatidylglycerol--prolipoprotein diacylglyceryl transferase (343 aa).

4 consecutive transmembrane segments (helical) span residues 22 to 42 (IPIR…LIIG), 54 to 74 (GVIY…GRLY), 97 to 117 (VWEG…GAWI), and 123 to 143 (GIPL…AQAI). Arginine 145 is a binding site for a 1,2-diacyl-sn-glycero-3-phospho-(1'-sn-glycerol). Helical transmembrane passes span 193 to 213 (VVHP…VLLI) and 257 to 277 (VNSF…LLAP). The disordered stretch occupies residues 283–343 (PATLGGTPSS…SADNSGIVEK (61 aa)). The span at 295 to 325 (GGDDTAETEATADTEDTEDTEDGVTDAPEAD) shows a compositional bias: acidic residues.

The protein belongs to the Lgt family.

It is found in the cell membrane. It carries out the reaction L-cysteinyl-[prolipoprotein] + a 1,2-diacyl-sn-glycero-3-phospho-(1'-sn-glycerol) = an S-1,2-diacyl-sn-glyceryl-L-cysteinyl-[prolipoprotein] + sn-glycerol 1-phosphate + H(+). The protein operates within protein modification; lipoprotein biosynthesis (diacylglyceryl transfer). In terms of biological role, catalyzes the transfer of the diacylglyceryl group from phosphatidylglycerol to the sulfhydryl group of the N-terminal cysteine of a prolipoprotein, the first step in the formation of mature lipoproteins. This chain is Phosphatidylglycerol--prolipoprotein diacylglyceryl transferase, found in Mycobacteroides abscessus (strain ATCC 19977 / DSM 44196 / CCUG 20993 / CIP 104536 / JCM 13569 / NCTC 13031 / TMC 1543 / L948) (Mycobacterium abscessus).